The chain runs to 336 residues: MTAIDFHKLAKIELHCHLDGSLSLSTIRHLAELAQIDLPEDDEELKQHVTAPVTCESLLEYLESFDYIRPLLQTNEALTIAAYDVAKQAALENVIYIEVRFAPELSMDKGLTVTETIDAVCQGLRQAQEEFGIIAKALVCGMRQSDQSLTARILDEANQVRDSDFVGFDFAGDELNYGPAAIKPLIEQVKSYNRPMTFHAGECGCPAFLAESIAMGIKRNGHATILAQEPELLDEFVKNGVTGELCLTSNLQTKAAVTVNDFPYLKMKAAGANITINTDNRTVSDTNLTKEYELYHKYFDSTVQDFYAHNKTAIEASFASDEEKEELLARLAKAYS.

Positions 15 and 17 each coordinate Zn(2+). Positions 17, 19, and 172 each coordinate substrate. Zn(2+) is bound at residue His199. Glu202 acts as the Proton donor in catalysis. Asp279 serves as a coordination point for Zn(2+).

It belongs to the metallo-dependent hydrolases superfamily. Adenosine and AMP deaminases family. Adenosine deaminase subfamily. Zn(2+) is required as a cofactor.

It catalyses the reaction adenosine + H2O + H(+) = inosine + NH4(+). The enzyme catalyses 2'-deoxyadenosine + H2O + H(+) = 2'-deoxyinosine + NH4(+). Its function is as follows. Catalyzes the hydrolytic deamination of adenosine and 2-deoxyadenosine. The chain is Adenosine deaminase from Streptococcus thermophilus (strain ATCC BAA-250 / LMG 18311).